The sequence spans 485 residues: Calcium/manganese antiporter SLC30A10 (485 aa).

Topologically, residues 1–10 are cytoplasmic; it reads MGRYSGKTCR. Residues 11–31 traverse the membrane as a helical segment; it reads LLFMLVLTVAFFVAELVSGYL. Residues 32-40 are Extracellular-facing; sequence GNSIALLSD. A helical transmembrane segment spans residues 41-61; that stretch reads SFNMLSDLISLCVGLSAGYIA. The Cytoplasmic portion of the chain corresponds to 62–81; the sequence is RRPTRGFSATYGYARAEVVG. A helical transmembrane segment spans residues 82–102; the sequence is ALSNAVFLTALCFTIFVEAVL. At 103-113 the chain is on the extracellular side; it reads RLARPERIDDP. The helical transmembrane segment at 114-134 threads the bilayer; sequence ELVLIVGVLGLLVNVVGLLIF. Residues 135 to 244 lie on the Cytoplasmic side of the membrane; it reads QDCAAWFACC…ALNIRGVLLH (110 aa). The tract at residues 167–196 is disordered; sequence FGGPQGAEDPRRAADPTAPGSDSAVTLRGT. The chain crosses the membrane as a helical span at residues 245–265; sequence VMGDALGSVVVVITAIIFYVL. At 266–278 the chain is on the extracellular side; the sequence is PLKSEDPCNWQCY. Residues 279-299 form a helical membrane-spanning segment; it reads IDPSLTVLMVIIILSSAFPLI. Residues 300 to 485 lie on the Cytoplasmic side of the membrane; that stretch reads KETAAILLQM…DQCYVNRTHF (186 aa). Residues 308–485 are required for plasma membrane localization; sequence QMVPKGVNME…DQCYVNRTHF (178 aa).

This sequence belongs to the cation diffusion facilitator (CDF) transporter (TC 2.A.4) family. SLC30A subfamily. As to quaternary structure, forms homodimers. Forms heterodimers and high-molecular weight oligomers with SLC30A3, SLC30A2 and SLC30A4; heterodimerization is mediated by covalent-bound tyrosine residues, occurs probably in a tissue-specific manner and could mediate the intracellular zinc transport activity into early endosomes and recycling endosomes. As to expression, specifically expressed in fetal liver and fetal brain. Expressed in adult tissues with relative levels small intestine &gt; liver &gt; testes &gt; brain &gt; ovary &gt; colon &gt; cervix &gt; prostate &gt; placenta. Expressed in liver and neurons of the nervous system (at protein level).

Its subcellular location is the cell membrane. The protein resides in the golgi apparatus membrane. It is found in the recycling endosome membrane. The protein localises to the early endosome membrane. It carries out the reaction Mn(2+)(out) + Ca(2+)(in) = Mn(2+)(in) + Ca(2+)(out). It catalyses the reaction Zn(2+)(in) = Zn(2+)(out). In terms of biological role, calcium:manganese antiporter of the plasma membrane mediating the efflux of intracellular manganese coupled to an active extracellular calcium exchange. Required for intracellular manganese homeostasis, an essential cation for the function of several enzymes, including some crucially important for the metabolism of neurotransmitters and other neuronal metabolic pathways. Manganese can also be cytotoxic and induce oxidative stress, mitochondrial dysfunction and apoptosis. Could also have an intracellular zinc ion transporter activity, directly regulating intracellular zinc ion homeostasis and more indirectly various signaling pathway and biological processes. This chain is Calcium/manganese antiporter SLC30A10, found in Homo sapiens (Human).